Here is a 130-residue protein sequence, read N- to C-terminus: Small ribosomal subunit protein uS11c (130 aa).

Belongs to the universal ribosomal protein uS11 family. In terms of assembly, part of the 30S ribosomal subunit.

The protein resides in the plastid. It is found in the chloroplast. The sequence is that of Small ribosomal subunit protein uS11c from Nephroselmis olivacea (Green alga).